A 554-amino-acid polypeptide reads, in one-letter code: MSFRDLRECIDSERGMEDVGLAAGRSQREKKRSYKDLLREEEEIAEQVRKSSKKRSRELDLFLASESHKKKKKHLTDDYHADTPSPDLAKKKKKALLPSPAPPSSSDTAMDLLKAITSPQVDTSTTHLPKKPEKILATPVNFSSPSQSSHKEHHKKIGEVSGDDSSHRSKKSKPLTLREPDGLRMKLILSPNEKSEEESASPQGGPGHSEGASSKKTSKKTGREETESRSSHKKHKKESHTPRSGGTPDSASSTGGELEAGELIIDDSFHEMKKKKKSKKSKKKKDKHKDEKHRKHSKSKREHEGEERPTQIASPVLPSPPPPTATTPTSPPSVPPQALITHAEEQLDKKKKKEDPEKPKKKNMSAYQVFSKEYRGSIIAEHPGIDFGELSKKLAEVWKQLPEKDKLAWKQKAQYLQHKQNKAEATTVKRKSSSSESAARSKGSSSGLPSPNKKSPTSVVSFSTSPAKVPDTEPIDVAAHLQLLGESLSLIGHRLQETEGMVAVSGSLSVLLDSILCALGPLVCLTSHVPQLNACPKQILSNTLDNIAYVMPGL.

3 disordered regions span residues R14 to Y34, Q47 to Q368, and H418 to K468. Positions T117–H127 are enriched in polar residues. Residues T221–S230 show a composition bias toward basic and acidic residues. The segment covering P242–G255 has biased composition (polar residues). Residues M272–K300 are compositionally biased toward basic residues. The span at L317–P335 shows a compositional bias: pro residues. Residues H342–K358 show a composition bias toward basic and acidic residues. A DNA-binding region (HMG box) is located at residues K360–V428. Over residues S434–P466 the composition is skewed to low complexity.

In terms of assembly, interacts with nlk.2.

Its subcellular location is the nucleus. Functionally, negatively regulates Wnt/beta-catenin signaling during development. This Xenopus tropicalis (Western clawed frog) protein is HMG box-containing protein 4 (hmgxb4).